A 542-amino-acid chain; its full sequence is Katanin p60 ATPase-containing subunit A-like 2 (542 aa).

The region spanning 25–57 (RRKNLLILIMHYLLQEGYMDSANSLEQETKISL) is the LisH domain. Disordered stretches follow at residues 94 to 126 (LDHD…RIAQ) and 142 to 168 (HAHQ…ASEI). The segment covering 114–126 (GSNSTQGLPRIAQ) has biased composition (polar residues). ATP is bound at residue 298 to 305 (GPPGTGKT).

This sequence belongs to the AAA ATPase family. Katanin p60 subunit A1 subfamily. A-like 2 sub-subfamily.

The protein resides in the cytoplasm. It localises to the cytoskeleton. Its subcellular location is the spindle. It is found in the spindle pole. It catalyses the reaction n ATP + n H2O + a microtubule = n ADP + n phosphate + (n+1) alpha/beta tubulin heterodimers.. Its function is as follows. Severs microtubules in vitro in an ATP-dependent manner. This activity may promote rapid reorganization of cellular microtubule arrays. This is Katanin p60 ATPase-containing subunit A-like 2 (katnal2) from Xenopus tropicalis (Western clawed frog).